We begin with the raw amino-acid sequence, 376 residues long: Carbamoyl phosphate synthase small chain (376 aa).

The interval 1–183 (MSKAVLVLED…PDGPPGVSRF (183 aa)) is CPSase. L-glutamine-binding residues include Ser-46, Gly-232, and Gly-234. A Glutamine amidotransferase type-1 domain is found at 184 to 376 (TVAALDLGIK…FVELMAGEGR (193 aa)). Cys-260 serves as the catalytic Nucleophile. The L-glutamine site is built by Phe-261, Gln-264, Asn-302, Gly-304, and Phe-305. Residues His-350 and Glu-352 contribute to the active site.

The protein belongs to the CarA family. In terms of assembly, composed of two chains; the small (or glutamine) chain promotes the hydrolysis of glutamine to ammonia, which is used by the large (or ammonia) chain to synthesize carbamoyl phosphate. Tetramer of heterodimers (alpha,beta)4.

It catalyses the reaction hydrogencarbonate + L-glutamine + 2 ATP + H2O = carbamoyl phosphate + L-glutamate + 2 ADP + phosphate + 2 H(+). The enzyme catalyses L-glutamine + H2O = L-glutamate + NH4(+). The protein operates within amino-acid biosynthesis; L-arginine biosynthesis; carbamoyl phosphate from bicarbonate: step 1/1. It participates in pyrimidine metabolism; UMP biosynthesis via de novo pathway; (S)-dihydroorotate from bicarbonate: step 1/3. Functionally, small subunit of the glutamine-dependent carbamoyl phosphate synthetase (CPSase). CPSase catalyzes the formation of carbamoyl phosphate from the ammonia moiety of glutamine, carbonate, and phosphate donated by ATP, constituting the first step of 2 biosynthetic pathways, one leading to arginine and/or urea and the other to pyrimidine nucleotides. The small subunit (glutamine amidotransferase) binds and cleaves glutamine to supply the large subunit with the substrate ammonia. The chain is Carbamoyl phosphate synthase small chain from Mycobacterium bovis (strain ATCC BAA-935 / AF2122/97).